Consider the following 463-residue polypeptide: Regulator of microtubule dynamics protein 3 (463 aa).

The Mitochondrial intermembrane segment spans residues 1–4 (MSKL). A helical transmembrane segment spans residues 5–27 (ILSYRIGLGLVVGAAAGAVIYIV). The Cytoplasmic portion of the chain corresponds to 28–463 (FRRNRKKTRK…PATAEEELLV (436 aa)). The FFAT signature appears at 146-161 (IYFTATSGAAHTDAES). The segment at 153–192 (GAAHTDAESEGGYSTAYAESDFERESSRASEAEEEDEVSC) is disordered. The segment covering 173–183 (DFERESSRASE) has biased composition (basic and acidic residues). The stretch at 279–302 (AEDAQEKKSFASEGKEEAEAALQK) forms a coiled coil.

It belongs to the RMDN family. Interacts with PTPN2. Interacts with microtubules. Interacts with VAPB. Interacts (FFAT motif) with MOSPD2 (via MSP domain).

It is found in the mitochondrion outer membrane. The protein resides in the cytoplasm. The protein localises to the nucleus. It localises to the cytoskeleton. Its subcellular location is the spindle. It is found in the spindle pole. Involved in cellular calcium homeostasis regulation. This chain is Regulator of microtubule dynamics protein 3 (rmdn3), found in Xenopus laevis (African clawed frog).